A 610-amino-acid polypeptide reads, in one-letter code: Elongation factor 4 (610 aa).

The tr-type G domain maps to 11–193 (ENIRNFSIIA…QIVEKVPAPS (183 aa)). Residues 23-28 (DHGKST) and 140-143 (NKID) each bind GTP.

It belongs to the TRAFAC class translation factor GTPase superfamily. Classic translation factor GTPase family. LepA subfamily.

It localises to the cell membrane. It carries out the reaction GTP + H2O = GDP + phosphate + H(+). In terms of biological role, required for accurate and efficient protein synthesis under certain stress conditions. May act as a fidelity factor of the translation reaction, by catalyzing a one-codon backward translocation of tRNAs on improperly translocated ribosomes. Back-translocation proceeds from a post-translocation (POST) complex to a pre-translocation (PRE) complex, thus giving elongation factor G a second chance to translocate the tRNAs correctly. Binds to ribosomes in a GTP-dependent manner. The polypeptide is Elongation factor 4 (Streptococcus equi subsp. zooepidemicus (strain MGCS10565)).